A 119-amino-acid polypeptide reads, in one-letter code: Large ribosomal subunit protein bL19 (119 aa).

The protein belongs to the bacterial ribosomal protein bL19 family.

Its function is as follows. This protein is located at the 30S-50S ribosomal subunit interface and may play a role in the structure and function of the aminoacyl-tRNA binding site. The polypeptide is Large ribosomal subunit protein bL19 (Petrotoga mobilis (strain DSM 10674 / SJ95)).